Consider the following 344-residue polypeptide: MVKVGIVGGTGYTGVEFLRLLAQHPQAEVVVITSRSEAGLAVADMYPNLRGHYDGLAFSVPDISTLGACDVVFFATPHGVAHALAGELLAAGTKVIDLSADFRLQDADEWAKWYGQPHGAPELLEEAVYGLPEVNREQIKQARLIAVPGCYPTATQLGFLPLLEAGLADVSRLIADCKSGVSGAGRGAAVGSLYSETSESMKAYAVKGHRHLPEIRQGLRRAAGQDVGLTFVPHLTPMIRGIHSTLYATVVDRSVDLQALFEKRYANEPFVDVMPAGSHPETRSVRGANVCRIAVHRPQDGDLVVVLSVIDNLVKGASGQAVQNMNILFGLDEKLGLSHAGMLP.

Cys150 is a catalytic residue.

The protein belongs to the NAGSA dehydrogenase family. Type 1 subfamily.

Its subcellular location is the cytoplasm. The catalysed reaction is N-acetyl-L-glutamate 5-semialdehyde + phosphate + NADP(+) = N-acetyl-L-glutamyl 5-phosphate + NADPH + H(+). It participates in amino-acid biosynthesis; L-arginine biosynthesis; N(2)-acetyl-L-ornithine from L-glutamate: step 3/4. Functionally, catalyzes the NADPH-dependent reduction of N-acetyl-5-glutamyl phosphate to yield N-acetyl-L-glutamate 5-semialdehyde. The protein is N-acetyl-gamma-glutamyl-phosphate reductase of Pseudomonas fluorescens (strain SBW25).